The sequence spans 212 residues: MSLFDKKHLVTQADALPGRNTPMPIATLHAVNEHSMTNVPAGMEIAYFAMGCFWGVERLFWQLPGVYSTAAGYAGGYTPNPTYREVCSGQTGHAEAVRVVYDPAVISYEQLLQVFWENHDPAQGMRQGNDHGTQYRSAIYPLTPEQSTAAHASRERFQSAMADAGDERPITTEIAHATPFYYAEDEHQQYLHKNPYGYCGVGGIGVCLPPDA.

C52 is a catalytic residue.

It belongs to the MsrA Met sulfoxide reductase family.

The catalysed reaction is L-methionyl-[protein] + [thioredoxin]-disulfide + H2O = L-methionyl-(S)-S-oxide-[protein] + [thioredoxin]-dithiol. It catalyses the reaction [thioredoxin]-disulfide + L-methionine + H2O = L-methionine (S)-S-oxide + [thioredoxin]-dithiol. In terms of biological role, has an important function as a repair enzyme for proteins that have been inactivated by oxidation. Catalyzes the reversible oxidation-reduction of methionine sulfoxide in proteins to methionine. This Salmonella arizonae (strain ATCC BAA-731 / CDC346-86 / RSK2980) protein is Peptide methionine sulfoxide reductase MsrA.